The following is a 119-amino-acid chain: Large ribosomal subunit protein uL22 (119 aa).

Belongs to the universal ribosomal protein uL22 family. As to quaternary structure, part of the 50S ribosomal subunit.

In terms of biological role, this protein binds specifically to 23S rRNA; its binding is stimulated by other ribosomal proteins, e.g. L4, L17, and L20. It is important during the early stages of 50S assembly. It makes multiple contacts with different domains of the 23S rRNA in the assembled 50S subunit and ribosome. Functionally, the globular domain of the protein is located near the polypeptide exit tunnel on the outside of the subunit, while an extended beta-hairpin is found that lines the wall of the exit tunnel in the center of the 70S ribosome. In Chlorobium luteolum (strain DSM 273 / BCRC 81028 / 2530) (Pelodictyon luteolum), this protein is Large ribosomal subunit protein uL22.